The primary structure comprises 246 residues: Granzyme H (246 aa).

Positions 1-18 (MQPFLLLLAFLLTPGAGT) are cleaved as a signal peptide. Residues 19–20 (EE) constitute a propeptide, activation peptide. The 224-residue stretch at 21–244 (IIGGHEAKPH…FLPWIKRTMK (224 aa)) folds into the Peptidase S1 domain. The interval 46–48 (RKR) is mediates the preference for acidic residues at the P3' and P4' sites. Residues cysteine 49 and cysteine 65 are joined by a disulfide bond. Histidine 64 serves as the catalytic Charge relay system. 2 N-linked (GlcNAc...) asparagine glycosylation sites follow: asparagine 71 and asparagine 104. The Charge relay system role is filled by aspartate 108. 2 cysteine pairs are disulfide-bonded: cysteine 142–cysteine 208 and cysteine 172–cysteine 187. Asparagine 179 is a glycosylation site (N-linked (GlcNAc...) asparagine). Serine 202 serves as the catalytic Charge relay system.

This sequence belongs to the peptidase S1 family. Granzyme subfamily. In terms of tissue distribution, constitutively expressed in NK cells.

The protein resides in the cytolytic granule. Its activity is regulated as follows. Inhibited by SERPINB1. Functionally, cytotoxic chymotrypsin-like serine protease with preference for bulky and aromatic residues at the P1 position and acidic residues at the P3' and P4' sites. Probably necessary for target cell lysis in cell-mediated immune responses. Participates in the antiviral response via direct cleavage of several proteins essential for viral replication. This chain is Granzyme H (GZMH), found in Homo sapiens (Human).